The chain runs to 331 residues: uncharacterized protein (331 aa).

Belongs to the IIV-6 335L family.

This is an uncharacterized protein from Invertebrate iridescent virus 6 (IIV-6).